Reading from the N-terminus, the 251-residue chain is Large ribosomal subunit protein uL16m (251 aa).

The N-terminal 29 residues, 1-29 (MWRLLTRVPAPLLRMHFSDSWAALPTSAG), are a transit peptide targeting the mitochondrion.

This sequence belongs to the universal ribosomal protein uL16 family. Component of the mitochondrial ribosome large subunit (39S) which comprises a 16S rRNA and about 50 distinct proteins.

The protein localises to the mitochondrion. This Mus musculus (Mouse) protein is Large ribosomal subunit protein uL16m (Mrpl16).